The following is a 190-amino-acid chain: Shikimate kinase (190 aa).

15–20 contributes to the ATP binding site; it reads GSGKST. Serine 19 provides a ligand contact to Mg(2+). The substrate site is built by aspartate 37, arginine 61, and glycine 83. Arginine 121 serves as a coordination point for ATP. Arginine 148 is a substrate binding site.

It belongs to the shikimate kinase family. Monomer. Mg(2+) serves as cofactor.

The protein resides in the cytoplasm. It catalyses the reaction shikimate + ATP = 3-phosphoshikimate + ADP + H(+). It participates in metabolic intermediate biosynthesis; chorismate biosynthesis; chorismate from D-erythrose 4-phosphate and phosphoenolpyruvate: step 5/7. Functionally, catalyzes the specific phosphorylation of the 3-hydroxyl group of shikimic acid using ATP as a cosubstrate. This chain is Shikimate kinase, found in Chlorobium chlorochromatii (strain CaD3).